The chain runs to 132 residues: Fluoride-specific ion channel FluC 3 (132 aa).

The next 4 helical transmembrane spans lie at 4–24 (ILLV…FGGW), 32–52 (FPVG…LIMY), 66–86 (IFLT…GYES), and 95–115 (LMLM…AVYL). Residues Gly74 and Thr77 each coordinate Na(+).

The protein belongs to the fluoride channel Fluc/FEX (TC 1.A.43) family.

The protein localises to the cell membrane. It carries out the reaction fluoride(in) = fluoride(out). Na(+) is not transported, but it plays an essential structural role and its presence is essential for fluoride channel function. In terms of biological role, fluoride-specific ion channel. Important for reducing fluoride concentration in the cell, thus reducing its toxicity. The protein is Fluoride-specific ion channel FluC 3 of Methanosarcina barkeri (strain Fusaro / DSM 804).